A 521-amino-acid chain; its full sequence is Bifunctional purine biosynthesis protein PurH (521 aa).

Residues 1 to 145 (MIKQALISVS…KNHRDVTVVV (145 aa)) form the MGS-like domain.

It belongs to the PurH family.

It carries out the reaction (6R)-10-formyltetrahydrofolate + 5-amino-1-(5-phospho-beta-D-ribosyl)imidazole-4-carboxamide = 5-formamido-1-(5-phospho-D-ribosyl)imidazole-4-carboxamide + (6S)-5,6,7,8-tetrahydrofolate. The catalysed reaction is IMP + H2O = 5-formamido-1-(5-phospho-D-ribosyl)imidazole-4-carboxamide. It participates in purine metabolism; IMP biosynthesis via de novo pathway; 5-formamido-1-(5-phospho-D-ribosyl)imidazole-4-carboxamide from 5-amino-1-(5-phospho-D-ribosyl)imidazole-4-carboxamide (10-formyl THF route): step 1/1. Its pathway is purine metabolism; IMP biosynthesis via de novo pathway; IMP from 5-formamido-1-(5-phospho-D-ribosyl)imidazole-4-carboxamide: step 1/1. The chain is Bifunctional purine biosynthesis protein PurH from Burkholderia lata (strain ATCC 17760 / DSM 23089 / LMG 22485 / NCIMB 9086 / R18194 / 383).